The chain runs to 316 residues: Pantothenate kinase (316 aa).

ATP is bound at residue 95–102; the sequence is GSVAVGKS.

This sequence belongs to the prokaryotic pantothenate kinase family.

The protein resides in the cytoplasm. The catalysed reaction is (R)-pantothenate + ATP = (R)-4'-phosphopantothenate + ADP + H(+). The protein operates within cofactor biosynthesis; coenzyme A biosynthesis; CoA from (R)-pantothenate: step 1/5. This Klebsiella pneumoniae (strain 342) protein is Pantothenate kinase.